Consider the following 422-residue polypeptide: G-protein coupled receptor 83 (422 aa).

The N-terminal stretch at 1–17 (MNVPPVLLLFLLSSVRA) is a signal peptide. Topologically, residues 18 to 70 (TEQPQVVTEHPSMDAALTGANASHFWANYTFSDWQNFVGRRRYGAESQNPTVK) are extracellular. A helical membrane pass occupies residues 71 to 91 (ALLIVAYSFIIVFSLFGNVLV). At 92–106 (CHVIFKNQRMHSATS) the chain is on the cytoplasmic side. Residues 107-127 (LFIVNLAVADIMITLLNTPFT) form a helical membrane-spanning segment. Topologically, residues 128–143 (LVRFVNSTWVFGKGMC) are extracellular. A disulfide bond links C143 and C223. The helical transmembrane segment at 144-166 (HVSRFAQYCSLHVSALTLTAIAV) threads the bilayer. The Cytoplasmic portion of the chain corresponds to 167 to 184 (DRHQVIMHPLKPRISITK). Residues 185–205 (GVIYIAVIWVMATFFSLPHAI) form a helical membrane-spanning segment. Residues 206–236 (CQKLFTFKYSEDIVRSLCLPDFPEPADLFWK) lie on the Extracellular side of the membrane. Residues 237-257 (YLDLATFILLYLLPLFIISVA) traverse the membrane as a helical segment. Residues 258 to 292 (YARVAKKLWLCNTIGDVTTEQYLALRRKKKTTVKM) are Cytoplasmic-facing. The chain crosses the membrane as a helical span at residues 293 to 313 (LVLVVVLFALCWFPLNCYVLL). Topologically, residues 314-326 (LSSKAIHTNNALY) are extracellular. Residues 327–347 (FAFHWFAMSSTCYNPFIYCWL) traverse the membrane as a helical segment. Topologically, residues 348 to 422 (NENFRVELKA…SSVEPTVAVS (75 aa)) are cytoplasmic. Residues 401 to 422 (PSSQIQSGKTDLSSVEPTVAVS) form a disordered region.

It belongs to the G-protein coupled receptor 1 family. As to expression, expressed preferentially in brain, and its neuronal expression is relegated to limbic brain regions, particularly in forebrain.

It is found in the cell membrane. Functionally, G-protein coupled receptor for PEN, a neuropeptide produced from the precursor protein, proSAAS (encoded by PCSK1N). Acts through a G(i)- and G(q)-alpha-alpha-mediated pathway in response to PEN. Plays a role in food intake and body weight regulation. May contribute to the regulation of anxiety-related behaviors. In Rattus norvegicus (Rat), this protein is G-protein coupled receptor 83.